Consider the following 424-residue polypeptide: UDP-sugar transporter protein SLC35A5 (424 aa).

Over 1–8 (MEKQCCSH) the chain is Cytoplasmic. Residues 9–29 (PVICSLSTMYTFLLGAIFIAL) traverse the membrane as a helical segment. Residues 30–53 (SSSRILLVKYSANEENKYDYLPTT) are Lumenal-facing. The helical transmembrane segment at 54–74 (ANVCSELVKLVFCVLVSFCVI) threads the bilayer. The Cytoplasmic segment spans residues 75–93 (KKDHQSRNLKYASWKEFSN). Residues 94–116 (FMKWSIPAFLYFLDNLIVFYVLS) traverse the membrane as a helical segment. Topologically, residues 117–119 (YLQ) are lumenal. Residues 120–142 (PAMAVIFSNFSIITTALLFRIVL) traverse the membrane as a helical segment. The Cytoplasmic portion of the chain corresponds to 143–147 (KRRLN). A helical membrane pass occupies residues 148–168 (WIQWASLLILFLSIVALTAGT). Over 169–228 (KTLQHNLAGHGFHHDAFFSPSNSCLLFRSECPRKDNCTAKEWTFPEAKWNTTARVFSHIR) the chain is Lumenal. The N-linked (GlcNAc...) asparagine glycan is linked to asparagine 204. Residues 229-249 (LGMGHVLIIVQCFISSMANIY) form a helical membrane-spanning segment. The Cytoplasmic portion of the chain corresponds to 250–263 (NEKILKEGNQLAES). Residues 264-284 (IFIQNSKLYFFGILFNGLTLG) form a helical membrane-spanning segment. Over 285-303 (LQRSNRDQIKNCGFFYGHN) the chain is Lumenal. The chain crosses the membrane as a helical span at residues 304 to 324 (AFSVALIFVTAFQGLSVAFIL). At 325–330 (KFLDNM) the chain is on the cytoplasmic side. A helical transmembrane segment spans residues 331-351 (FHVLMAQVTTVIITTVSVLVF). The Lumenal segment spans residues 352–354 (DFR). A helical membrane pass occupies residues 355-375 (PSLEFFLEAPSVLLSIFIYNA). Over 376–424 (SKPQGPEYAPRQERIRDLSGNLWERSSGDGEELERLTKPKSDESDEDTF) the chain is Cytoplasmic. Residues serine 394, serine 416, and serine 419 each carry the phosphoserine modification. The interval 395–424 (GNLWERSSGDGEELERLTKPKSDESDEDTF) is disordered. Over residues 408 to 417 (LERLTKPKSD) the composition is skewed to basic and acidic residues.

It belongs to the nucleotide-sugar transporter family. SLC35A subfamily. Probably forms homooligomers and heterooligomers with SLC35A1, SLC35A2, SLC35A3 and SLC35A4.

It is found in the golgi apparatus membrane. It catalyses the reaction UMP(out) + UDP-alpha-D-glucuronate(in) = UMP(in) + UDP-alpha-D-glucuronate(out). It carries out the reaction UMP(out) + UDP-N-acetyl-alpha-D-glucosamine(in) = UMP(in) + UDP-N-acetyl-alpha-D-glucosamine(out). The enzyme catalyses UDP-N-acetyl-alpha-D-galactosamine(in) + UMP(out) = UDP-N-acetyl-alpha-D-galactosamine(out) + UMP(in). Probable UDP-sugar:UMP transmembrane antiporter involved in UDP-alpha-D-glucuronate/UDP-GlcA, UDP-GlcNAc/UDP-N-acetyl-alpha-D-glucosamine and UDP-N-acetyl-alpha-D-galactosamine/UDP-GalNAc transport from the cytosol to the lumen of the Golgi. This is UDP-sugar transporter protein SLC35A5 from Pongo abelii (Sumatran orangutan).